Here is a 154-residue protein sequence, read N- to C-terminus: Myoglobin (154 aa).

The Globin domain occupies 2-148 (GLSDGEWQLV…FRNDIAAKYK (147 aa)). Position 4 is a phosphoserine (S4). Nitrite is bound at residue H65. H65 contacts O2. T68 is subject to Phosphothreonine. H94 serves as a coordination point for heme b.

Belongs to the globin family. As to quaternary structure, monomeric.

The protein localises to the cytoplasm. Its subcellular location is the sarcoplasm. The enzyme catalyses Fe(III)-heme b-[protein] + nitric oxide + H2O = Fe(II)-heme b-[protein] + nitrite + 2 H(+). The catalysed reaction is H2O2 + AH2 = A + 2 H2O. Monomeric heme protein which primary function is to store oxygen and facilitate its diffusion within muscle tissues. Reversibly binds oxygen through a pentacoordinated heme iron and enables its timely and efficient release as needed during periods of heightened demand. Depending on the oxidative conditions of tissues and cells, and in addition to its ability to bind oxygen, it also has a nitrite reductase activity whereby it regulates the production of bioactive nitric oxide. Under stress conditions, like hypoxia and anoxia, it also protects cells against reactive oxygen species thanks to its pseudoperoxidase activity. The sequence is that of Myoglobin (MB) from Ctenodactylus gundi (Northern gundi).